We begin with the raw amino-acid sequence, 160 residues long: Major pollen allergen Bet v 1-C (160 aa).

Brassinolide-binding residues include K55, Y82, Y84, and N101.

Belongs to the BetVI family.

It localises to the cytoplasm. In terms of biological role, may be a general steroid carrier protein. In Betula pendula (European white birch), this protein is Major pollen allergen Bet v 1-C (BETV1C).